The sequence spans 485 residues: Taxane 13-alpha-hydroxylase (485 aa).

Position 431 (Cys-431) interacts with heme.

This sequence belongs to the cytochrome P450 family. The cofactor is heme.

The enzyme catalyses taxa-4(20),11-dien-5alpha-ol + reduced [NADPH--hemoprotein reductase] + O2 = taxa-4(20),11-dien-5alpha,13alpha-diol + oxidized [NADPH--hemoprotein reductase] + H2O + H(+). It participates in alkaloid biosynthesis; taxol biosynthesis. In terms of biological role, involved in the transformation of a taxadienyl acetate by hydroxylation at C13 to yield taxadien-5-alpha-acetoxy-13-alpha-ol. This is Taxane 13-alpha-hydroxylase (CYP725A2) from Taxus cuspidata (Japanese yew).